Reading from the N-terminus, the 299-residue chain is tRNA dimethylallyltransferase (299 aa).

ATP is bound at residue 11–18 (GPTGSGKS). Substrate is bound at residue 13 to 18 (TGSGKS).

This sequence belongs to the IPP transferase family. Monomer. Requires Mg(2+) as cofactor.

It catalyses the reaction adenosine(37) in tRNA + dimethylallyl diphosphate = N(6)-dimethylallyladenosine(37) in tRNA + diphosphate. Functionally, catalyzes the transfer of a dimethylallyl group onto the adenine at position 37 in tRNAs that read codons beginning with uridine, leading to the formation of N6-(dimethylallyl)adenosine (i(6)A). This chain is tRNA dimethylallyltransferase, found in Pseudarthrobacter chlorophenolicus (strain ATCC 700700 / DSM 12829 / CIP 107037 / JCM 12360 / KCTC 9906 / NCIMB 13794 / A6) (Arthrobacter chlorophenolicus).